A 926-amino-acid chain; its full sequence is MAKPVAASFLTQANALFKKNLTYQKRNIWSNVRLIVIPLYLCVVLVCIQAVFDSLVNNSVDNQCGCRCADDDKNGDGKCEIKSCGLQYSSQNQAVFCAFPNPPPLLPLLHIPPSVNRDSCQRTGSCPVTILVTGNNQSLGTTLSENLLSTSFTVNSSSDLFLRNLAYNVLSTTSETDYTNYRDPGIYSDLPIFNIQPQCTPATILSLSFRQPPLEFHKEVRCVQGLNLWRNNSLEVNDEIFKGFRKENHEEIINEVAAAYDLLNTDRNKFNVTIWYYTTYKGDLQDWRVKYVRVPRSVNMVSNAYLQFLRGPGTKILFDFVKEMPKQETRLRMDMASLIGPIFFTWVILLLFPVILTSLVYEKQQRLRIIMKMHGLGDAPYWMISYAYFLAISTLYIVCLMIFGSAIGLKFFRFNDYTIQFMFYFLYINLQISIAFLVSSAFSKAVTASVVAYIYVFGSGLLGAFLFQFLIESLSFPRRWIFVMELYPGFSLYRGLYEFSQYAFQRNLNGRDGMKWKDFRGSAMDEVFTIIIVEWVVALVATYYIDRVSSSSKDTFAFLKNPFKLSPTPQMLSFQKERSDVSVEMEKLDVIQEKETVKQLIFERSKNHGIVCDNLKKVYQGRDGNPPKLAVCGLSLAVPSGECFGMLGPNGAGKTSFINMMTGLVKPSSGSAFVQGLDICKDMDKVYISMGVCPQHDLLWETLTGKEHLLFYGRLKNLKGHDLNQAVEESLKSVNLFHGGVADIPAGKYSGGMKRRLSVAISLIGSPKVVYMDEPSTGLDPASRINLWTVIKRAKKHAAIILTTHSMEEAEFLCDRLGIFVDGRLQCIGNPKELKGRYGGSYVLTITTSPEHEKDVETLVQEVSSNARKIYHIAGTQKFEFPKEEVRISEVFQAVENAKRNFTVFAWGFADTTLEDVFIKVAKTGL.

6 helical membrane-spanning segments follow: residues 34-54 (LIVIPLYLCVVLVCIQAVFDS), 336-356 (ASLIGPIFFTWVILLLFPVIL), 389-409 (FLAISTLYIVCLMIFGSAIGL), 418-438 (TIQFMFYFLYINLQISIAFLV), 451-471 (VAYIYVFGSGLLGAFLFQFLI), and 525-545 (DEVFTIIIVEWVVALVATYYI). The ABC transporter domain maps to 610 to 847 (IVCDNLKKVY…YGGSYVLTIT (238 aa)). 648 to 655 (GPNGAGKT) is a binding site for ATP.

It belongs to the ABC transporter superfamily. ABCA family. CPR flippase (TC 3.A.1.211) subfamily.

It is found in the membrane. This chain is ABC transporter A family member 6 (ABCA6), found in Arabidopsis thaliana (Mouse-ear cress).